The sequence spans 290 residues: Xylanase inhibitor protein 2 (290 aa).

An N-terminal signal peptide occupies residues 1–27 (MGLVHALLPFAAAAALLLLAAPPPATA). Residues 30–290 (PGLAVYWGRH…DKKANYTGEG (261 aa)) form the GH18 domain. Cys49 and Cys89 are oxidised to a cystine. Asn112 is a glycosylation site (N-linked (GlcNAc...) asparagine). Residues Cys187 and Cys216 are joined by a disulfide bond. N-linked (GlcNAc...) asparagine glycosylation occurs at Asn285.

The protein belongs to the glycosyl hydrolase 18 family. Xylanase inhibitor subfamily. In terms of assembly, binds to fungal GH10 xylanases.

It is found in the secreted. Its function is as follows. Fungal xylanase inhibitor. Possesses competitive inhibiting activity against several fungal endo-1,4-beta-D-xylanases belonging to glycoside hydrolase family 10 (GH10) and family 11 (GH11). May function in plant defense against secreted fungal pathogen xylanases. Is similar to class III chitinases, but does not exhibit chitinase activity. This chain is Xylanase inhibitor protein 2, found in Oryza sativa subsp. japonica (Rice).